A 347-amino-acid chain; its full sequence is Ribosomal RNA small subunit methyltransferase H (347 aa).

S-adenosyl-L-methionine contacts are provided by residues 50-52 (GGH), aspartate 69, phenylalanine 96, aspartate 125, and glutamine 132.

This sequence belongs to the methyltransferase superfamily. RsmH family.

It is found in the cytoplasm. The catalysed reaction is cytidine(1402) in 16S rRNA + S-adenosyl-L-methionine = N(4)-methylcytidine(1402) in 16S rRNA + S-adenosyl-L-homocysteine + H(+). In terms of biological role, specifically methylates the N4 position of cytidine in position 1402 (C1402) of 16S rRNA. This Corynebacterium aurimucosum (strain ATCC 700975 / DSM 44827 / CIP 107346 / CN-1) (Corynebacterium nigricans) protein is Ribosomal RNA small subunit methyltransferase H.